The following is a 379-amino-acid chain: MSSETLEFSGCNFFRIRLAYSILSGRPIRIINIRKNDDRPGIRDFESKLIGLLEKVTNGTKVEISRTGTQVIFRPGMITGGVVNLDCGTERCISYFLEPLLLLSPFCKVPMVIKLKGVTNAPGEISVDGMKASWLKVYNKFVLNDEKLDIKIQARGLKPEGGGVVVFTAPIVKTLRPVKRQQVGKVCKIRGQAYVTKVTPSLAYRMIDAAKKAMHGYISDVYITVDQRKGDAGGASPGYGLFLTAETTEGVIYQAEAISRPKGESGVPILPEDIGIEAGHALLQQIYMGGALDSSAQILASTFMTLCPKDVSHFLYGPLPMYSVHALRHLKQFFEIEFKMEDFKKTLKEEEADLKTGSADKAMVTAVGVGYSNLNKTIL.

This sequence belongs to the RNA 3'-terminal cyclase family. Type 2 subfamily. Part of the small subunit (SSU) processome, composed of more than 70 proteins and the RNA chaperone small nucleolar RNA (snoRNA) U3.

Its subcellular location is the nucleus. It localises to the nucleolus. Its function is as follows. Part of the small subunit (SSU) processome, first precursor of the small eukaryotic ribosomal subunit. During the assembly of the SSU processome in the nucleolus, many ribosome biogenesis factors, an RNA chaperone and ribosomal proteins associate with the nascent pre-rRNA and work in concert to generate RNA folding, modifications, rearrangements and cleavage as well as targeted degradation of pre-ribosomal RNA by the RNA exosome. Does not have cyclase activity. The sequence is that of Probable RNA 3'-terminal phosphate cyclase-like protein from Caenorhabditis elegans.